The primary structure comprises 484 residues: GTPase Obg (484 aa).

Positions 7–164 constitute an Obg domain; that stretch reads PRFVDRVVIH…RDLTLELKTV (158 aa). The tract at residues 21–43 is disordered; it reads SGGNGCASVHREKFKPLGGPDGG. Positions 165-345 constitute an OBG-type G domain; it reads ADVGLVGFPS…LIFGLSQMIS (181 aa). Residues 171-178, 196-200, 217-220, 297-300, and 326-328 each bind GTP; these read GFPSAGKS, FTTLV, DVPG, NKID, and STA. 2 residues coordinate Mg(2+): Ser-178 and Thr-198. An OCT domain is found at 363-441; the sequence is PIPVDDSGFT…IGEMTFDWEP (79 aa). Residues 439–484 are disordered; that stretch reads WEPQTPAGEPVAMSGRGTDPRLDSNKRVGAAERKAARSRRREHGDG. Basic and acidic residues predominate over residues 456–473; sequence TDPRLDSNKRVGAAERKA. The segment covering 474 to 484 has biased composition (basic residues); the sequence is ARSRRREHGDG.

The protein belongs to the TRAFAC class OBG-HflX-like GTPase superfamily. OBG GTPase family. In terms of assembly, monomer. Requires Mg(2+) as cofactor.

It localises to the cytoplasm. Functionally, an essential GTPase which binds GTP, GDP and possibly (p)ppGpp with moderate affinity, with high nucleotide exchange rates and a fairly low GTP hydrolysis rate. Plays a role in control of the cell cycle, stress response, ribosome biogenesis and in those bacteria that undergo differentiation, in morphogenesis control. The chain is GTPase Obg from Mycobacterium tuberculosis (strain CDC 1551 / Oshkosh).